The sequence spans 126 residues: Fluoride-specific ion channel FluC (126 aa).

Helical transmembrane passes span isoleucine 5 to glycine 25, tyrosine 34 to leucine 54, valine 71 to phenylalanine 91, and phenylalanine 100 to tyrosine 120. 2 residues coordinate Na(+): glycine 76 and threonine 79.

Belongs to the fluoride channel Fluc/FEX (TC 1.A.43) family.

Its subcellular location is the cell inner membrane. It catalyses the reaction fluoride(in) = fluoride(out). Its activity is regulated as follows. Na(+) is not transported, but it plays an essential structural role and its presence is essential for fluoride channel function. In terms of biological role, fluoride-specific ion channel. Important for reducing fluoride concentration in the cell, thus reducing its toxicity. The protein is Fluoride-specific ion channel FluC of Campylobacter hominis (strain ATCC BAA-381 / DSM 21671 / CCUG 45161 / LMG 19568 / NCTC 13146 / CH001A).